Here is a 249-residue protein sequence, read N- to C-terminus: Elsinochromes biosynthesis cluster protein HP3 (249 aa).

N106 carries N-linked (GlcNAc...) asparagine glycosylation. Residues V138–A158 form a helical membrane-spanning segment.

It localises to the membrane. In terms of biological role, part of the gene cluster that mediates the biosynthesis of elsinochromes, pigments consisting of at least four interconvertible tautomers (A, B, C and D) that have a core phenolic quinone to which various side chains are attached and which play an important role in fungal pathogenesis. The non-reducing polyketide synthase PKS1 was proposed to iteratively catalyze decarboxylation between acetyl-CoA and malonyl-CoA subunits for polyketide chain elongation. The released polyketide undergoes cyclization to form an aromatic ring, and proceeds via serial modification steps to produce the heptaketide back- bone of elsinochrome. As elsinochrome has a symmetrical structure, two identical heptaketides are fused to form a core 1,2-dihydrobenzo-perylene ring structure, which can then be successively modified to produce the various derivatives of elsinochrome. Some of these reactions may be cooperatively carried out, at least in part, by the products of RDT1, OXR1 and PKS1. PRF1, embedded within the elsinochrome cluster possibly functions to stabilize some of the biosynthetic enzymes required for elsinochrome production. As prefoldin is a hexamer containing 2 a and 4 b subunits, additional prefoldin subunits, whose coding genes may not immediately link to the elsinochrome biosynthetic gene cluster, are required to fulfill the chaperone function. In addition, no methyltransferase-coding gene exists within the biosynthetic gene cluster, even though elsinochrome has four methyl groups at positions C3, C7, C8 and C12. Apparently, the identified gene cluster does not contain the entire entourage of genes responsible for elsinochrome biosynthesis. Once elsinochrome is synthesized, it must be exported outside the fungal cells, which is probably accomplished by the ECT1 transporter, to avoid toxicity. In Elsinoe fawcettii (Citrus scab fungus), this protein is Elsinochromes biosynthesis cluster protein HP3.